We begin with the raw amino-acid sequence, 987 residues long: Voltage-gated delayed rectifier potassium channel KCNH1 (987 aa).

The Cytoplasmic portion of the chain corresponds to 1–220 (MTMAGGRKGL…LHYCVFKTTW (220 aa)). The region spanning 14 to 94 (QNTFLENIVR…QTFENYEMNS (81 aa)) is the PAS domain. The PAC domain maps to 93-145 (NSFEILMYKKNRTPVWFFVKIAPIRNEQDKVVLFLCTFSDITAFKQPIEDDSC). The required for phosphatidylinositol bisphosphate binding stretch occupies residues 151–162 (FARLTRALTSSR). Residues 221–241 (DWIILILTFYTAILVPYNVSF) form a helical membrane-spanning segment. Topologically, residues 242 to 248 (KTRQNNV) are extracellular. A helical transmembrane segment spans residues 249-269 (AWLVVDSIVDVIFLVDIVLNF). Over 270–290 (HTTFVGPAGEVISDPKLIRMN) the chain is Cytoplasmic. A helical membrane pass occupies residues 291–309 (YLKTWFVIDLLSCLPYDVI). Residues 310–345 (NAFENVDEVSAFMGDPGKIGFADQIPPPLEGRESQG) lie on the Extracellular side of the membrane. The helical; Voltage-sensor transmembrane segment at 346 to 368 (ISSLFSSLKVVRLLRLGRVARKL) threads the bilayer. Residues 369 to 377 (DHYIEYGAA) lie on the Cytoplasmic side of the membrane. Residues 378–399 (VLVLLVCVFGLAAHWMACIWYS) form a helical membrane-spanning segment. Topologically, residues 400–448 (IGDYEIFDEDTKTIRNNSWLYQLAMDIGTPYQFNGSGSGKWEGGPSKNS) are extracellular. Residues N415 and N433 are each glycosylated (N-linked (GlcNAc...) asparagine). Positions 449 to 470 (VYISSLYFTMTSLTSVGFGNIA) form an intramembrane region, pore-forming. The Selectivity filter motif lies at 463-468 (SVGFGN). At 471–477 (PSTDIEK) the chain is on the extracellular side. The chain crosses the membrane as a helical span at residues 478 to 498 (IFAVAIMMIGSLLYATIFGNV). The Cytoplasmic segment spans residues 499–987 (TTIFQQMYAN…ESERDIFGAS (489 aa)). Residues 673–770 (KRDALQKVLE…LDDLDVEKGS (98 aa)) are calmodulin-binding. An interaction with cyclic nucleotide-binding pocket region spans residues 699-701 (YNL). The interval 922-962 (AAVLEVKHELKEDIKALSTKMTSIEKQLSEILRILTSRRSS) is CAD (involved in subunit assembly). Residues 960–987 (RSSQSPQELFEISRPQSPESERDIFGAS) form a disordered region. Phosphoserine is present on residues S972, S976, and S979. The span at 978 to 987 (ESERDIFGAS) shows a compositional bias: basic and acidic residues.

The protein belongs to the potassium channel family. H (Eag) (TC 1.A.1.20) subfamily. Kv10.1/KCNH1 sub-subfamily. As to quaternary structure, homomultimer. The potassium channel is composed of a homo- or heterotetrameric complex of pore-forming alpha subunits that can associate with modulating beta subunits. Heteromultimer with KCNH5/EAG2. Interacts with ALG10B. Interacts with RABEP1. Interacts (via C-terminus) with CTTN. Interacts (via C-terminal cytoplasmic region) with Ca(2+)-bound calmodulin. Channel activity is regulated via tyrosine phosphorylation/dephosphorylation by SRC and PTPN6. In terms of tissue distribution, detected in cerebellum, cortex and retina.

Its subcellular location is the cell membrane. It localises to the nucleus inner membrane. The protein localises to the cell projection. It is found in the dendrite. The protein resides in the axon. Its subcellular location is the presynaptic cell membrane. It localises to the perikaryon. The protein localises to the postsynaptic density membrane. It is found in the early endosome membrane. It catalyses the reaction K(+)(in) = K(+)(out). Channel activity is inhibited by interaction with Ca(2+)-bound calmodulin. Interaction of a single pore-forming alpha subunit with a calmodulin chain is sufficient to promote channel closure. Extracellular magnesium ion concentrations up to 4 mM modulate channel activity by slowing down current activation in a reversible fashion. Channel activity is not regulated by cyclic nucleotides. Channel activity is inhibited by binding intracellular phosphatidylinositol-3,5-bisphosphate and phosphatidylinositol-4,5-bisphosphate (PIP2), but is not inhibited by phosphatidylinositol 4-phosphate. Functionally, pore-forming (alpha) subunit of a voltage-gated delayed rectifier potassium channel that mediates outward-rectifying potassium currents which, on depolarization, reaches a steady-state level and do not inactivate. The activation kinetics depend on the prepulse potential and external divalent cation concentration. With negative prepulses, the current activation is delayed and slowed down several fold, whereas more positive prepulses speed up activation. The time course of activation is biphasic with a fast and a slowly activating current component. Activates at more positive membrane potentials and exhibit a steeper activation curve. Channel properties are modulated by subunit assembly. Mediates IK(NI) current in myoblasts. Involved in the regulation of cell proliferation and differentiation, in particular adipogenic and osteogenic differentiation in bone marrow-derived mesenchymal stem cells (MSCs). The sequence is that of Voltage-gated delayed rectifier potassium channel KCNH1 from Bos taurus (Bovine).